The following is a 171-amino-acid chain: bZIP transcription factor 2 (171 aa).

Positions 1–24 (MASSSSTYRSSSSSDGGNNNPSDS) are enriched in low complexity. The disordered stretch occupies residues 1-54 (MASSSSTYRSSSSSDGGNNNPSDSVVTVDERKRKRMLSNRESARRSRMRKQKHV). One can recognise a bZIP domain in the interval 29-92 (DERKRKRMLS…MKIQAENSVL (64 aa)). Residues 31 to 52 (RKRKRMLSNRESARRSRMRKQK) are basic motif. The segment at 57–71 (LTAQINQLSNDNRQI) is leucine-zipper.

As to quaternary structure, forms heterodimers with BZIP9, BZIP10, BZIP25 and BZIP63. Component of a ternary complex composed of BZIP2-BZIP63 heterodimer and KIN10.

It is found in the nucleus. Its function is as follows. Transcription factor that binds to specific DNA sequences in target gene promoters. BZIP2-BZIP63-KIN10 complex binds to the ETFQO promoter to up-regulate its transcription. This Arabidopsis thaliana (Mouse-ear cress) protein is bZIP transcription factor 2.